Here is a 279-residue protein sequence, read N- to C-terminus: Probable nicotinate-nucleotide pyrophosphorylase [carboxylating] (279 aa).

Residues arginine 90, 125–127 (TRK), arginine 149, lysine 159, glutamate 189, aspartate 210, 238–240 (SGG), and 259–261 (MGF) each bind substrate.

This sequence belongs to the NadC/ModD family. Hexamer formed by 3 homodimers.

It carries out the reaction nicotinate beta-D-ribonucleotide + CO2 + diphosphate = quinolinate + 5-phospho-alpha-D-ribose 1-diphosphate + 2 H(+). It participates in cofactor biosynthesis; NAD(+) biosynthesis; nicotinate D-ribonucleotide from quinolinate: step 1/1. Functionally, involved in the catabolism of quinolinic acid (QA). This chain is Probable nicotinate-nucleotide pyrophosphorylase [carboxylating] (nadC), found in Methanothermobacter thermautotrophicus (strain ATCC 29096 / DSM 1053 / JCM 10044 / NBRC 100330 / Delta H) (Methanobacterium thermoautotrophicum).